Here is a 491-residue protein sequence, read N- to C-terminus: Cytochrome P450 2H1 (491 aa).

Heme is bound at residue cysteine 436.

Belongs to the cytochrome P450 family. The cofactor is heme. Expressed in liver.

The protein resides in the endoplasmic reticulum membrane. The protein localises to the microsome membrane. It catalyses the reaction an organic molecule + reduced [NADPH--hemoprotein reductase] + O2 = an alcohol + oxidized [NADPH--hemoprotein reductase] + H2O + H(+). Cytochromes P450 are a group of heme-thiolate monooxygenases. In liver microsomes, this enzyme is involved in an NADPH-dependent electron transport pathway. It oxidizes a variety of structurally unrelated compounds, including steroids, fatty acids, and xenobiotics. This Gallus gallus (Chicken) protein is Cytochrome P450 2H1 (CYP2H1).